The primary structure comprises 288 residues: Bifunctional protein FolD 2 (288 aa).

Residues 166 to 168 (GRS) and serine 191 contribute to the NADP(+) site.

Belongs to the tetrahydrofolate dehydrogenase/cyclohydrolase family. As to quaternary structure, homodimer.

The catalysed reaction is (6R)-5,10-methylene-5,6,7,8-tetrahydrofolate + NADP(+) = (6R)-5,10-methenyltetrahydrofolate + NADPH. It carries out the reaction (6R)-5,10-methenyltetrahydrofolate + H2O = (6R)-10-formyltetrahydrofolate + H(+). Its pathway is one-carbon metabolism; tetrahydrofolate interconversion. Functionally, catalyzes the oxidation of 5,10-methylenetetrahydrofolate to 5,10-methenyltetrahydrofolate and then the hydrolysis of 5,10-methenyltetrahydrofolate to 10-formyltetrahydrofolate. The chain is Bifunctional protein FolD 2 from Frankia alni (strain DSM 45986 / CECT 9034 / ACN14a).